Consider the following 676-residue polypeptide: Potassium-transporting ATPase ATP-binding subunit (676 aa).

4 helical membrane passes run 24-44 (NPVM…CFYP), 45-65 (MGIP…TLLF), 212-232 (IFLI…VPFT), and 246-266 (SLVI…GALI). The 4-aspartylphosphate intermediate role is filled by Asp-302. Residues Asp-339, Glu-343, 372-379 (FSAKTRMS), and Lys-390 contribute to the ATP site. Mg(2+)-binding residues include Asp-513 and Asp-517. A run of 3 helical transmembrane segments spans residues 573–593 (FSIA…FYSI), 611–631 (AILS…PLAL), and 656–676 (GIIA…LIIL).

Belongs to the cation transport ATPase (P-type) (TC 3.A.3) family. Type IA subfamily. As to quaternary structure, the system is composed of three essential subunits: KdpA, KdpB and KdpC.

The protein localises to the cell membrane. The enzyme catalyses K(+)(out) + ATP + H2O = K(+)(in) + ADP + phosphate + H(+). Its function is as follows. Part of the high-affinity ATP-driven potassium transport (or Kdp) system, which catalyzes the hydrolysis of ATP coupled with the electrogenic transport of potassium into the cytoplasm. This subunit is responsible for energy coupling to the transport system and for the release of the potassium ions to the cytoplasm. This is Potassium-transporting ATPase ATP-binding subunit from Enterococcus faecalis (strain ATCC 700802 / V583).